Consider the following 155-residue polypeptide: Small ribosomal subunit protein uS7 (155 aa).

Belongs to the universal ribosomal protein uS7 family. As to quaternary structure, part of the 30S ribosomal subunit. Contacts proteins S9 and S11.

In terms of biological role, one of the primary rRNA binding proteins, it binds directly to 16S rRNA where it nucleates assembly of the head domain of the 30S subunit. Is located at the subunit interface close to the decoding center, probably blocks exit of the E-site tRNA. This chain is Small ribosomal subunit protein uS7, found in Malacoplasma penetrans (strain HF-2) (Mycoplasma penetrans).